The chain runs to 81 residues: Small ribosomal subunit protein bS18 (81 aa).

This sequence belongs to the bacterial ribosomal protein bS18 family. As to quaternary structure, part of the 30S ribosomal subunit. Forms a tight heterodimer with protein bS6.

Binds as a heterodimer with protein bS6 to the central domain of the 16S rRNA, where it helps stabilize the platform of the 30S subunit. This Chlamydia trachomatis serovar L2 (strain ATCC VR-902B / DSM 19102 / 434/Bu) protein is Small ribosomal subunit protein bS18.